Consider the following 273-residue polypeptide: Large ribosomal subunit protein uL2 (273 aa).

Disordered regions lie at residues D35–I54 and G222–K273. Residues K39 to I49 are compositionally biased toward polar residues. Positions D229–N239 are enriched in basic and acidic residues. The span at K253–K273 shows a compositional bias: basic residues.

It belongs to the universal ribosomal protein uL2 family. As to quaternary structure, part of the 50S ribosomal subunit. Forms a bridge to the 30S subunit in the 70S ribosome.

One of the primary rRNA binding proteins. Required for association of the 30S and 50S subunits to form the 70S ribosome, for tRNA binding and peptide bond formation. It has been suggested to have peptidyltransferase activity; this is somewhat controversial. Makes several contacts with the 16S rRNA in the 70S ribosome. The chain is Large ribosomal subunit protein uL2 from Aeromonas salmonicida (strain A449).